We begin with the raw amino-acid sequence, 83 residues long: Three-finger toxin MALT0052C (83 aa).

The N-terminal stretch at 1–21 (MKTLLLTLVVVTIVCLDFGHT) is a signal peptide. 4 disulfides stabilise this stretch: C24-C45, C38-C62, C64-C75, and C76-C81.

The protein belongs to the three-finger toxin family. Short-chain subfamily. Type I alpha-neurotoxin sub-subfamily. In terms of tissue distribution, expressed by the venom gland.

The protein localises to the secreted. Functionally, binds to muscle nicotinic acetylcholine receptor (nAChR) and inhibit acetylcholine from binding to the receptor, thereby impairing neuromuscular transmission. In Micrurus altirostris (Uruguayan coral snake), this protein is Three-finger toxin MALT0052C.